Reading from the N-terminus, the 159-residue chain is Cyanate hydratase (159 aa).

Residues R103, E106, and S129 contribute to the active site.

This sequence belongs to the cyanase family.

The catalysed reaction is cyanate + hydrogencarbonate + 3 H(+) = NH4(+) + 2 CO2. Functionally, catalyzes the reaction of cyanate with bicarbonate to produce ammonia and carbon dioxide. This is Cyanate hydratase from Blastomyces gilchristii (strain SLH14081) (Blastomyces dermatitidis).